We begin with the raw amino-acid sequence, 37 residues long: U10-ctenitoxin-Co1a (37 aa).

Disulfide bonds link Cys-2/Cys-17, Cys-9/Cys-22, Cys-16/Cys-33, and Cys-24/Cys-31.

Expressed by the venom gland.

It localises to the secreted. Its function is as follows. Antagonist of L-type calcium channels (Cav1/CACNA1). In Ctenus ornatus (Brazilian spider), this protein is U10-ctenitoxin-Co1a.